The following is a 363-amino-acid chain: LLWLLLLPTLCGLGAADWSAPSLACARGPAFWCQSLEQALQCRALGHCLQEVWGNARADDLCQECQDIVRILTKMTKEAIFQDMVRKFLEHECDVLPLKLLTPQCHHMLGTYFPVVVDYFQSQINPKIICKHLGLCKPGLPEPEQESELSDPLLDKLILPELPGALQVTGPHTQDLSEQQLPIPLPYCWLCRTLIKRIQAMIPKGVLAVTVGQVCHVVPLVVGGICQCLGERYTVLLLDALLGRMLPQLVCGLVLRCSHEDSAGPALASLPSEWSPQESKCQLCMFVTTQAGNHSEQATPQAIRQACLSSWLDRQKCEQFVEQHMPRLQTLASGGRDAHTTCQALGACRTTFSPLQCIHIPHF.

The N-terminal stretch at L1–A16 is a signal peptide. A propeptide spanning residues D17 to Q180 is cleaved from the precursor. In terms of domain architecture, Saposin A-type spans W18–A58. 3 Saposin B-type domains span residues A58 to L140, P184 to D261, and Q277 to F352. 9 disulfides stabilise this stretch: C62-C136, C65-C130, C93-C105, C188-C257, C191-C251, C215-C226, C281-C348, C284-C342, and C307-C317. A propeptide spanning residues E260 to F363 is cleaved from the precursor. N293 carries an N-linked (GlcNAc...) asparagine glycan.

As to quaternary structure, homodimer; disulfide-linked.

The protein resides in the secreted. Its subcellular location is the extracellular space. It localises to the surface film. Functionally, pulmonary surfactant-associated proteins promote alveolar stability by lowering the surface tension at the air-liquid interface in the peripheral air spaces. SP-B increases the collapse pressure of palmitic acid to nearly 70 millinewtons per meter. The chain is Pulmonary surfactant-associated protein B (SFTPB) from Canis lupus familiaris (Dog).